Here is a 271-residue protein sequence, read N- to C-terminus: Potential ATP-binding protein (271 aa).

ATP is bound at residue 34–41 (GQPGVGKT).

In Staphylococcus aureus, this protein is Potential ATP-binding protein.